The following is a 377-amino-acid chain: E3 ubiquitin-protein ligase RING1 (377 aa).

Residues 1-205 (MDGTEIAVSP…GGAGSEDSGD (205 aa)) form a necessary for transcriptional repression region. A Phosphoserine modification is found at Ser-9. The RING-type zinc finger occupies 19–59 (CPICLDMLKNTMTTKECLHRFCSDCIVTALRSGNKECPTCR). Phosphoserine is present on residues Ser-111, Ser-158, and Ser-161. Disordered regions lie at residues 119-234 (QAMH…GEIE) and 280-325 (QQQE…PSLE). Positions 146-158 (DPGEGEGDGEDVS) are enriched in acidic residues. The Nuclear localization signal motif lies at 172-175 (KRPR). Residues 176 to 199 (GGGAGGSSVGTGGGGTGGVGGGAG) are compositionally biased toward gly residues. A phosphothreonine mark is found at Thr-186 and Thr-191. 2 positions are modified to phosphoserine: Ser-200 and Ser-203. A necessary for interaction with CBX2 region spans residues 201-377 (EDSGDRGGTL…LCYAPTKDPK (177 aa)). Gly residues predominate over residues 206–215 (RGGTLGGGTL). A compositionally biased stretch (pro residues) spans 217 to 229 (PPSPPGAPSPPEP). 2 positions are modified to phosphoserine: Ser-219 and Ser-225. The span at 286–314 (EPGGPGGGASDTGGPDGGGGEGGGAGGGD) shows a compositional bias: gly residues.

As to quaternary structure, component of chromatin-associated Polycomb (PcG) complexes. Part of the E2F6.com-1 complex in G0 phase composed of E2F6, MGA, MAX, TFDP1, CBX3, BAT8, EUHMTASE1, RING1, RNF2/RING2 MBLR, L3MBTL2 and YAF2. Interacts with CBX2 and PCGF6. Component of a PRC1-like complex. Component of repressive BCOR complex containing Polycomb group subcomplex at least composed of RYBP, PCGF1, BCOR and RNF2/RING2. Interacts with BMI1, PHC2, PCGF2, RNF2; CBX6, CBX7 and CBX8. Interacts with MN1.

It is found in the nucleus speckle. It catalyses the reaction S-ubiquitinyl-[E2 ubiquitin-conjugating enzyme]-L-cysteine + [acceptor protein]-L-lysine = [E2 ubiquitin-conjugating enzyme]-L-cysteine + N(6)-ubiquitinyl-[acceptor protein]-L-lysine.. The protein operates within protein modification; protein ubiquitination. In terms of biological role, constitutes one of the E3 ubiquitin-protein ligases that mediate monoubiquitination of 'Lys-119' of histone H2A, thereby playing a central role in histone code and gene regulation. H2A 'Lys-119' ubiquitination gives a specific tag for epigenetic transcriptional repression and participates in X chromosome inactivation of female mammals. Essential component of a Polycomb group (PcG) multiprotein PRC1-like complex, a complex class required to maintain the transcriptionally repressive state of many genes, including Hox genes, throughout development. PcG PRC1 complex acts via chromatin remodeling and modification of histones, rendering chromatin heritably changed in its expressibility. Compared to RNF2/RING2, it does not have the main E3 ubiquitin ligase activity on histone H2A, and it may rather act as a modulator of RNF2/RING2 activity. The sequence is that of E3 ubiquitin-protein ligase RING1 (RING1) from Gorilla gorilla gorilla (Western lowland gorilla).